We begin with the raw amino-acid sequence, 146 residues long: MHVLLLNGPNLNLLGQREPGIYGHSSLADIEAALTREAEQESVQLDCFQSNFEGALVDRIHQAMGRCDGILINAGAYTHTSIAIRDALAGVAIPYVEVHLSNTHARENFRHHSFLAERAVGVICGFGPASYSFALNGLLSHLRRNA.

The Proton acceptor role is filled by tyrosine 22. Substrate-binding residues include asparagine 73, histidine 79, and aspartate 86. Catalysis depends on histidine 99, which acts as the Proton donor. Substrate-binding positions include 100 to 101 and arginine 110; that span reads LS.

This sequence belongs to the type-II 3-dehydroquinase family. Homododecamer.

The enzyme catalyses 3-dehydroquinate = 3-dehydroshikimate + H2O. It functions in the pathway metabolic intermediate biosynthesis; chorismate biosynthesis; chorismate from D-erythrose 4-phosphate and phosphoenolpyruvate: step 3/7. Catalyzes a trans-dehydration via an enolate intermediate. This chain is 3-dehydroquinate dehydratase, found in Synechococcus sp. (strain CC9605).